An 86-amino-acid chain; its full sequence is Small ribosomal subunit protein bS20 (86 aa).

The protein belongs to the bacterial ribosomal protein bS20 family.

Functionally, binds directly to 16S ribosomal RNA. The sequence is that of Small ribosomal subunit protein bS20 from Rhodococcus opacus (strain B4).